Here is a 361-residue protein sequence, read N- to C-terminus: Palmitoyltransferase ZDHHC2 (361 aa).

Residues 1–15 (MAPSGSRSFDCWRVL) are Cytoplasmic-facing. The helical transmembrane segment at 16–36 (YWIPVLFISLIVAWSYYAYVV) threads the bilayer. The Lumenal segment spans residues 37-50 (QLCIETIENMGEKT). Residues 51–71 (VYLLIYHLLFLMFVWSYWQTI) form a helical membrane-spanning segment. The Cytoplasmic portion of the chain corresponds to 72–167 (YSKPMNPLKE…NNCVGFANYK (96 aa)). The region spanning 124–174 (RYCDRCLLLKPDRCHHCSACDMCILKMDHHCPWVNNCVGFANYKFFMLFLA) is the DHHC domain. The active-site S-palmitoyl cysteine intermediate is the cysteine 154. Residues 168–188 (FFMLFLAYSLLYCLFVTATDM) form a helical membrane-spanning segment. The Lumenal portion of the chain corresponds to 189 to 207 (QYFIQFWTNGLPDTQAKFH). Residues 208-228 (IMFLFFAASTFSVSLAFLFAY) traverse the membrane as a helical segment. Residues 229–361 (HCWLVCKNRS…NPALTIEKET (133 aa)) are Cytoplasmic-facing. The interval 296 to 361 (NPDPEQPSIP…NPALTIEKET (66 aa)) is mediates localization to plasma membrane and recycling endosomes. The segment covering 299-308 (PEQPSIPPGR) has biased composition (pro residues). The interval 299-361 (PEQPSIPPGR…NPALTIEKET (63 aa)) is disordered. Polar residues predominate over residues 331–340 (SRLLNNGQTD). Residues 333–334 (LL) carry the Non-canonical dileucine endocytic signal motif. Positions 352-355 (NPAL) match the NPxY-like endocytic signal motif.

Belongs to the DHHC palmitoyltransferase family. Monomer. Homodimer. The monomeric form has a higher catalytic activity. Autopalmitoylated.

The protein resides in the endoplasmic reticulum membrane. The protein localises to the golgi apparatus membrane. It is found in the postsynaptic density. It localises to the postsynaptic recycling endosome membrane. Its subcellular location is the cell membrane. It carries out the reaction L-cysteinyl-[protein] + hexadecanoyl-CoA = S-hexadecanoyl-L-cysteinyl-[protein] + CoA. The catalysed reaction is L-cysteinyl-[protein] + tetradecanoyl-CoA = S-tetradecanoyl-L-cysteinyl-[protein] + CoA. The enzyme catalyses L-cysteinyl-[protein] + octadecanoyl-CoA = S-octadecanoyl-L-cysteinyl-[protein] + CoA. Palmitoyltransferase that catalyzes the addition of palmitate onto various protein substrates and is involved in a variety of cellular processes. Has no stringent fatty acid selectivity and in addition to palmitate can also transfer onto target proteins myristate from tetradecanoyl-CoA and stearate from octadecanoyl-CoA. In Danio rerio (Zebrafish), this protein is Palmitoyltransferase ZDHHC2.